A 491-amino-acid chain; its full sequence is Bifunctional protein GlmU (491 aa).

The interval methionine 1–arginine 238 is pyrophosphorylase. UDP-N-acetyl-alpha-D-glucosamine-binding positions include leucine 14–glycine 17, lysine 28, glutamine 81, glycine 86–threonine 87, tyrosine 110–aspartate 112, glycine 149, glutamate 163, asparagine 178, and asparagine 236. Residue aspartate 112 coordinates Mg(2+). Asparagine 236 is a binding site for Mg(2+). Residues alanine 239 to alanine 259 form a linker region. Positions glycine 260 to proline 491 are N-acetyltransferase. UDP-N-acetyl-alpha-D-glucosamine is bound by residues arginine 341 and lysine 359. The active-site Proton acceptor is histidine 371. 2 residues coordinate UDP-N-acetyl-alpha-D-glucosamine: tyrosine 374 and asparagine 385. Acetyl-CoA contacts are provided by residues alanine 388, asparagine 394–tyrosine 395, serine 413, and alanine 431. The tract at residues alanine 460–proline 491 is disordered.

In the N-terminal section; belongs to the N-acetylglucosamine-1-phosphate uridyltransferase family. The protein in the C-terminal section; belongs to the transferase hexapeptide repeat family. In terms of assembly, homotrimer. It depends on Mg(2+) as a cofactor.

The protein localises to the cytoplasm. It carries out the reaction alpha-D-glucosamine 1-phosphate + acetyl-CoA = N-acetyl-alpha-D-glucosamine 1-phosphate + CoA + H(+). The enzyme catalyses N-acetyl-alpha-D-glucosamine 1-phosphate + UTP + H(+) = UDP-N-acetyl-alpha-D-glucosamine + diphosphate. Its pathway is nucleotide-sugar biosynthesis; UDP-N-acetyl-alpha-D-glucosamine biosynthesis; N-acetyl-alpha-D-glucosamine 1-phosphate from alpha-D-glucosamine 6-phosphate (route II): step 2/2. It functions in the pathway nucleotide-sugar biosynthesis; UDP-N-acetyl-alpha-D-glucosamine biosynthesis; UDP-N-acetyl-alpha-D-glucosamine from N-acetyl-alpha-D-glucosamine 1-phosphate: step 1/1. It participates in bacterial outer membrane biogenesis; LPS lipid A biosynthesis. Functionally, catalyzes the last two sequential reactions in the de novo biosynthetic pathway for UDP-N-acetylglucosamine (UDP-GlcNAc). The C-terminal domain catalyzes the transfer of acetyl group from acetyl coenzyme A to glucosamine-1-phosphate (GlcN-1-P) to produce N-acetylglucosamine-1-phosphate (GlcNAc-1-P), which is converted into UDP-GlcNAc by the transfer of uridine 5-monophosphate (from uridine 5-triphosphate), a reaction catalyzed by the N-terminal domain. The polypeptide is Bifunctional protein GlmU (Kineococcus radiotolerans (strain ATCC BAA-149 / DSM 14245 / SRS30216)).